Consider the following 730-residue polypeptide: Rap1 GTPase-activating protein 2 (730 aa).

Residue serine 7 is modified to Phosphoserine; by PKG/PRKG1; in vitro. The disordered stretch occupies residues 32-53 (ANSSDATLPDRPLSPPLTAPPT). Serine 45 carries the phosphoserine modification. The residue at position 49 (threonine 49) is a Phosphothreonine. The region spanning 248–464 (IVSYDEHEVN…RTRAALLDNL (217 aa)) is the Rap-GAP domain. Position 507 is a phosphoserine (serine 507). The segment at 509–533 (ETMVGGQKKSHSGGIPGSLSGGISH) is disordered. Residues serine 544, serine 558, serine 564, serine 612, and serine 613 each carry the phosphoserine modification. The interval 552-730 (VKNQSRSPIK…LSHASSGAGH (179 aa)) is disordered. Polar residues predominate over residues 585-613 (DSTSSTPKTPDGGHSSQEIKSETSSNPSS). Residues 618–631 (PNKEKPFMKLKENG) show a composition bias toward basic and acidic residues. The segment covering 635–647 (SRSSSSTSSVSST) has biased composition (low complexity). A compositionally biased stretch (polar residues) spans 661–670 (GSQPSTTSPF). The segment covering 678–687 (SPSPSSESPS) has biased composition (low complexity). Over residues 699–712 (RSPTDAKSRNSPRS) the composition is skewed to polar residues.

In terms of processing, in vitro phosphorylated by cGMP-dependent protein kinase 1 (cGKI) at Ser-7; the phosphorylation probably does not regulate GAP activity. As to expression, isoform 1 and isoform 2 are expressed in platelets with isoform 2 being the predominant form. Expressed in lymphocytes, heart, testis and pancreas.

The protein resides in the cytoplasm. The protein localises to the perinuclear region. Its function is as follows. GTPase activator for the nuclear Ras-related regulatory protein RAP-1A (KREV-1), converting it to the putatively inactive GDP-bound state. The polypeptide is Rap1 GTPase-activating protein 2 (RAP1GAP2) (Homo sapiens (Human)).